The sequence spans 342 residues: Histidinol-phosphate aminotransferase 2 (342 aa).

Position 206 is an N6-(pyridoxal phosphate)lysine (Lys206).

This sequence belongs to the class-II pyridoxal-phosphate-dependent aminotransferase family. Histidinol-phosphate aminotransferase subfamily. Pyridoxal 5'-phosphate is required as a cofactor.

It carries out the reaction L-histidinol phosphate + 2-oxoglutarate = 3-(imidazol-4-yl)-2-oxopropyl phosphate + L-glutamate. Its pathway is amino-acid biosynthesis; L-histidine biosynthesis; L-histidine from 5-phospho-alpha-D-ribose 1-diphosphate: step 7/9. This Archaeoglobus fulgidus (strain ATCC 49558 / DSM 4304 / JCM 9628 / NBRC 100126 / VC-16) protein is Histidinol-phosphate aminotransferase 2 (hisC2).